The sequence spans 25 residues: MVSEAIAALKEREGSSEFAIGKKKE.

The H15 domain maps to 1–25 (MVSEAIAALKEREGSSEFAIGKKKE). Residues 1–25 (MVSEAIAALKEREGSSEFAIGKKKE) are disordered. Residues 9–25 (LKEREGSSEFAIGKKKE) show a composition bias toward basic and acidic residues.

It is found in the nucleus. Its subcellular location is the chromosome. Its function is as follows. Histones H1 are necessary for the condensation of nucleosome chains into higher-order structures. This Triticum aestivum (Wheat) protein is Histone H1.1.